Here is a 345-residue protein sequence, read N- to C-terminus: Uroporphyrinogen decarboxylase (345 aa).

Substrate-binding positions include 27 to 31, phenylalanine 46, aspartate 76, tyrosine 152, serine 207, and histidine 320; that span reads RQAGR.

Belongs to the uroporphyrinogen decarboxylase family. Homodimer.

Its subcellular location is the cytoplasm. It catalyses the reaction uroporphyrinogen III + 4 H(+) = coproporphyrinogen III + 4 CO2. It participates in porphyrin-containing compound metabolism; protoporphyrin-IX biosynthesis; coproporphyrinogen-III from 5-aminolevulinate: step 4/4. Its function is as follows. Catalyzes the decarboxylation of four acetate groups of uroporphyrinogen-III to yield coproporphyrinogen-III. In Oceanobacillus iheyensis (strain DSM 14371 / CIP 107618 / JCM 11309 / KCTC 3954 / HTE831), this protein is Uroporphyrinogen decarboxylase.